The chain runs to 158 residues: 2-C-methyl-D-erythritol 2,4-cyclodiphosphate synthase (158 aa).

Residues aspartate 9 and histidine 11 each contribute to the a divalent metal cation site. 4-CDP-2-C-methyl-D-erythritol 2-phosphate-binding positions include 9-11 (DVH) and 35-36 (HS). Histidine 43 contacts a divalent metal cation. 4-CDP-2-C-methyl-D-erythritol 2-phosphate-binding positions include 57–59 (DIG), 62–66 (FPDTD), 133–136 (TTTE), phenylalanine 140, and arginine 143.

It belongs to the IspF family. As to quaternary structure, homotrimer. It depends on a divalent metal cation as a cofactor.

It catalyses the reaction 4-CDP-2-C-methyl-D-erythritol 2-phosphate = 2-C-methyl-D-erythritol 2,4-cyclic diphosphate + CMP. It functions in the pathway isoprenoid biosynthesis; isopentenyl diphosphate biosynthesis via DXP pathway; isopentenyl diphosphate from 1-deoxy-D-xylulose 5-phosphate: step 4/6. Involved in the biosynthesis of isopentenyl diphosphate (IPP) and dimethylallyl diphosphate (DMAPP), two major building blocks of isoprenoid compounds. Catalyzes the conversion of 4-diphosphocytidyl-2-C-methyl-D-erythritol 2-phosphate (CDP-ME2P) to 2-C-methyl-D-erythritol 2,4-cyclodiphosphate (ME-CPP) with a corresponding release of cytidine 5-monophosphate (CMP). This chain is 2-C-methyl-D-erythritol 2,4-cyclodiphosphate synthase, found in Haemophilus influenzae (strain PittEE).